Here is a 109-residue protein sequence, read N- to C-terminus: Large ribosomal subunit protein uL22 (109 aa).

This sequence belongs to the universal ribosomal protein uL22 family. As to quaternary structure, part of the 50S ribosomal subunit.

This protein binds specifically to 23S rRNA; its binding is stimulated by other ribosomal proteins, e.g. L4, L17, and L20. It is important during the early stages of 50S assembly. It makes multiple contacts with different domains of the 23S rRNA in the assembled 50S subunit and ribosome. Functionally, the globular domain of the protein is located near the polypeptide exit tunnel on the outside of the subunit, while an extended beta-hairpin is found that lines the wall of the exit tunnel in the center of the 70S ribosome. The protein is Large ribosomal subunit protein uL22 of Polaromonas sp. (strain JS666 / ATCC BAA-500).